The chain runs to 367 residues: 2-aminoethylphosphonate--pyruvate transaminase (367 aa).

Pyridoxal 5'-phosphate-binding positions include 65-67 (SGS), Tyr92, Thr143, and Asp168. Lys194 carries the post-translational modification N6-(pyridoxal phosphate)lysine. Thr243 is a pyridoxal 5'-phosphate binding site.

Belongs to the class-V pyridoxal-phosphate-dependent aminotransferase family. PhnW subfamily. As to quaternary structure, homodimer. Pyridoxal 5'-phosphate serves as cofactor.

The enzyme catalyses (2-aminoethyl)phosphonate + pyruvate = phosphonoacetaldehyde + L-alanine. In terms of biological role, involved in phosphonate degradation. The protein is 2-aminoethylphosphonate--pyruvate transaminase (phnW) of Salmonella typhimurium (strain LT2 / SGSC1412 / ATCC 700720).